Consider the following 1187-residue polypeptide: DNA-directed RNA polymerase subunit beta (1187 aa).

The tract at residues 1150-1187 (KDEDDDPASSADDLGFNIGARPDAAAKEDQKAEEPEYQ) is disordered. Over residues 1173 to 1187 (AAAKEDQKAEEPEYQ) the composition is skewed to basic and acidic residues.

The protein belongs to the RNA polymerase beta chain family. The RNAP catalytic core consists of 2 alpha, 1 beta, 1 beta' and 1 omega subunit. When a sigma factor is associated with the core the holoenzyme is formed, which can initiate transcription.

The enzyme catalyses RNA(n) + a ribonucleoside 5'-triphosphate = RNA(n+1) + diphosphate. In terms of biological role, DNA-dependent RNA polymerase catalyzes the transcription of DNA into RNA using the four ribonucleoside triphosphates as substrates. The sequence is that of DNA-directed RNA polymerase subunit beta from Bifidobacterium longum (strain DJO10A).